The sequence spans 337 residues: Phenylpyruvate C(3)-methyltransferase (337 aa).

Belongs to the methyltransferase superfamily.

It catalyses the reaction 3-phenylpyruvate + S-adenosyl-L-methionine = (3S)-2-oxo-3-phenylbutanoate + S-adenosyl-L-homocysteine + H(+). The protein operates within antibiotic biosynthesis. In terms of biological role, S-adenosyl-L-methionine-dependent methyltransferase involved in synthesis of the nonproteinogenic amino acid (2S,3S)-beta-methyl-phenylalanine, a building block of the antibiotic mannopeptimycin. In Streptomyces hygroscopicus, this protein is Phenylpyruvate C(3)-methyltransferase (mppJ).